The primary structure comprises 371 residues: Cytochrome b (371 aa).

4 helical membrane-spanning segments follow: residues 25–45, 69–90, 105–125, and 170–190; these read FGSM…FLAI, WTMQ…YIHI, WLSG…GYVL, and FFAL…AHIM. Heme b is bound by residues H75 and H89. Residues H174 and H188 each contribute to the heme b site. An a ubiquinone-binding site is contributed by H193. Helical transmembrane passes span 218–238, 280–300, 312–332, and 339–358; these read NKDM…LSFL, LGGT…PFTH, MTQT…WTAT, and FMFI…FMNP.

It belongs to the cytochrome b family. In terms of assembly, the cytochrome bc1 complex contains 3 respiratory subunits (MT-CYB, CYC1 and UQCRFS1), 2 core proteins (UQCRC1 and UQCRC2) and probably 6 low-molecular weight proteins. The cofactor is heme b.

It localises to the mitochondrion inner membrane. Component of the ubiquinol-cytochrome c reductase complex (complex III or cytochrome b-c1 complex) that is part of the mitochondrial respiratory chain. The b-c1 complex mediates electron transfer from ubiquinol to cytochrome c. Contributes to the generation of a proton gradient across the mitochondrial membrane that is then used for ATP synthesis. The chain is Cytochrome b (MT-CYB) from Elapsoidea nigra (Usambara garter snake).